Consider the following 391-residue polypeptide: Putative F-box protein At1g47730 (391 aa).

Positions 1–12 are enriched in basic and acidic residues; that stretch reads MEQREEKTENIQ. Positions 1–25 are disordered; sequence MEQREEKTENIQRKRSRGKSSSSSL. Positions 19-68 constitute an F-box domain; sequence KSSSSSLPLDLTSEIFSRLPAKSVVRFRCVSKLWSSITTAPYFTNSFETR.

This Arabidopsis thaliana (Mouse-ear cress) protein is Putative F-box protein At1g47730.